Reading from the N-terminus, the 102-residue chain is Trans-acting regulatory protein HvrA (102 aa).

A DNA-binding region spans residues 80–85 (RGRKPK).

This sequence belongs to the histone-like protein H-NS family. Homodimer that oligomerizes on DNA into higher-order complexes that form bridges between disparate regions of DNA compacting it.

It localises to the cytoplasm. It is found in the nucleoid. In terms of biological role, a dim-light trans-acting activator of Puf and Puh expression, that has no effect on the expression of the Puc operon. Responsible for regulating light-harvesting-I and reaction center structural gene expression differentially from that of light-harvesting-II expression in response to alterations in light. Proper light regulation of light-harvesting and reaction center polypeptide synthesis is an important physiological trait that enables cells to adapt to ever-changing environmental conditions of light intensity. The chain is Trans-acting regulatory protein HvrA (hvrA) from Rhodobacter capsulatus (Rhodopseudomonas capsulata).